The following is a 386-amino-acid chain: Putative 8-amino-7-oxononanoate synthase (386 aa).

Arg26 provides a ligand contact to substrate. 113–114 contributes to the pyridoxal 5'-phosphate binding site; the sequence is GY. His138 contacts substrate. Pyridoxal 5'-phosphate contacts are provided by residues Ser186, 211–214, and 240–243; these read DDAH and TLSK. At Lys243 the chain carries N6-(pyridoxal phosphate)lysine. Thr352 is a substrate binding site.

It belongs to the class-II pyridoxal-phosphate-dependent aminotransferase family. BioF subfamily. In terms of assembly, homodimer. Pyridoxal 5'-phosphate serves as cofactor.

The catalysed reaction is 6-carboxyhexanoyl-[ACP] + L-alanine + H(+) = (8S)-8-amino-7-oxononanoate + holo-[ACP] + CO2. It participates in cofactor biosynthesis; biotin biosynthesis. Its function is as follows. Catalyzes the decarboxylative condensation of pimeloyl-[acyl-carrier protein] and L-alanine to produce 8-amino-7-oxononanoate (AON), [acyl-carrier protein], and carbon dioxide. The protein is Putative 8-amino-7-oxononanoate synthase (bioF) of Phenylobacterium zucineum (strain HLK1).